Reading from the N-terminus, the 533-residue chain is Dipeptidase (533 aa).

Cys3 is a catalytic residue.

The protein belongs to the peptidase C69 family.

The catalysed reaction is an L-aminoacyl-L-amino acid + H2O = 2 an L-alpha-amino acid. In terms of biological role, hydrolyzes a wide range of dipeptides. Highest activity against Ala-Gln. This Bifidobacterium longum (strain NCC 2705) protein is Dipeptidase.